Here is a 248-residue protein sequence, read N- to C-terminus: Enolase-phosphatase E1 (248 aa).

Mg(2+) is bound by residues Asp14 and Glu16. Substrate contacts are provided by residues 145-146 (SS) and Lys179. Asp204 contacts Mg(2+).

This sequence belongs to the HAD-like hydrolase superfamily. MasA/MtnC family. Monomer. Mg(2+) serves as cofactor.

The protein resides in the cytoplasm. The protein localises to the nucleus. It catalyses the reaction 5-methylsulfanyl-2,3-dioxopentyl phosphate + H2O = 1,2-dihydroxy-5-(methylsulfanyl)pent-1-en-3-one + phosphate. Its pathway is amino-acid biosynthesis; L-methionine biosynthesis via salvage pathway; L-methionine from S-methyl-5-thio-alpha-D-ribose 1-phosphate: step 3/6. The protein operates within amino-acid biosynthesis; L-methionine biosynthesis via salvage pathway; L-methionine from S-methyl-5-thio-alpha-D-ribose 1-phosphate: step 4/6. In terms of biological role, bifunctional enzyme that catalyzes the enolization of 2,3-diketo-5-methylthiopentyl-1-phosphate (DK-MTP-1-P) into the intermediate 2-hydroxy-3-keto-5-methylthiopentenyl-1-phosphate (HK-MTPenyl-1-P), which is then dephosphorylated to form the acireductone 1,2-dihydroxy-3-keto-5-methylthiopentene (DHK-MTPene). The sequence is that of Enolase-phosphatase E1 from Caenorhabditis elegans.